Consider the following 563-residue polypeptide: Arginine--tRNA ligase (563 aa).

The short motif at A134–N144 is the 'HIGH' region element.

It belongs to the class-I aminoacyl-tRNA synthetase family. As to quaternary structure, monomer.

It is found in the cytoplasm. It catalyses the reaction tRNA(Arg) + L-arginine + ATP = L-arginyl-tRNA(Arg) + AMP + diphosphate. The chain is Arginine--tRNA ligase from Heliobacterium modesticaldum (strain ATCC 51547 / Ice1).